The sequence spans 953 residues: Valine--tRNA ligase (953 aa).

Residues 42–52 (PNVTGSLHMGH) carry the 'HIGH' region motif. The short motif at 554 to 558 (KMSKS) is the 'KMSKS' region element. Lys-557 provides a ligand contact to ATP. Residues 884–952 (LIDKDAELDR…LEQQKATIAA (69 aa)) adopt a coiled-coil conformation.

It belongs to the class-I aminoacyl-tRNA synthetase family. ValS type 1 subfamily. Monomer.

It localises to the cytoplasm. The enzyme catalyses tRNA(Val) + L-valine + ATP = L-valyl-tRNA(Val) + AMP + diphosphate. Catalyzes the attachment of valine to tRNA(Val). As ValRS can inadvertently accommodate and process structurally similar amino acids such as threonine, to avoid such errors, it has a 'posttransfer' editing activity that hydrolyzes mischarged Thr-tRNA(Val) in a tRNA-dependent manner. The sequence is that of Valine--tRNA ligase from Vibrio cholerae serotype O1 (strain ATCC 39315 / El Tor Inaba N16961).